The chain runs to 460 residues: Orexin receptor type 2 (460 aa).

Topologically, residues 1–54 are extracellular; sequence MSSTKLEDSLPRRNWSSASELNETQEPFLNPTDYDDEEFLRYLWREYLHPKEYE. N-linked (GlcNAc...) asparagine glycans are attached at residues N14 and N22. The required for response to orexin-A stretch occupies residues 33–49; that stretch reads DYDDEEFLRYLWREYLH. Residues 55-75 form a helical membrane-spanning segment; it reads WVLIAGYIIVFVVALIGNVLV. The Cytoplasmic portion of the chain corresponds to 76 to 88; sequence CVAVWKNHHMRTV. The chain crosses the membrane as a helical span at residues 89–110; it reads TNYFIVNLSLADVLVTITCLPA. The Extracellular portion of the chain corresponds to 111-127; sequence TLVVDITETWFFGQSLC. A disulfide bridge connects residues C127 and C210. The chain crosses the membrane as a helical span at residues 128 to 150; sequence KVIPYLQTVSVSVSVLTLSCIAL. Over 151–170 the chain is Cytoplasmic; that stretch reads DRWYAICHPLMFKSTAKRAR. Residues 171–191 traverse the membrane as a helical segment; it reads NSIVVIWIVSCIIMIPQAIVM. Over 192 to 222 the chain is Extracellular; sequence ERSSMLPGLANKTTLFTVCDERWGGEVYPKM. N202 carries an N-linked (GlcNAc...) asparagine glycan. A helical transmembrane segment spans residues 223–243; it reads YHICFFLVTYMAPLCLMVLAY. At 244-304 the chain is on the cytoplasmic side; that stretch reads LQIFRKLWCR…QIRARRKTAR (61 aa). The helical transmembrane segment at 305–326 threads the bilayer; that stretch reads MLMVVLLVFAICYLPISILNVL. Over 327 to 342 the chain is Extracellular; sequence KRVFGMFTHTEDRETV. Residues 343–366 traverse the membrane as a helical segment; sequence YAWFTFSHWLVYANSAANPIIYNF. The Cytoplasmic portion of the chain corresponds to 367-460; sequence LSGKFREEFK…SSLLSTWLEV (94 aa).

Belongs to the G-protein coupled receptor 1 family. As to expression, expressed in the brain in the cerebral cortex, septal nuclei, hippocampus, medial thalamic groups, dorsal and median raphe nuclei, and many hypothalamic nuclei including the tuberomammillary nucleus, dorsomedial hypothalamus, paraventricular hypothalamic nucleus, and ventral premammillary nucleus. Not detected in the spleen, lung, liver, skeletal muscle, kidney and testis. Orexin receptor mRNA expression has also been reported in the adrenal gland, enteric nervous system, and pancreas.

The protein resides in the cell membrane. Functionally, nonselective, high-affinity receptor for both orexin-A and orexin-B neuropeptides. Triggers an increase in cytoplasmic Ca(2+) levels in response to orexin-A binding. The polypeptide is Orexin receptor type 2 (Hcrtr2) (Rattus norvegicus (Rat)).